Here is a 487-residue protein sequence, read N- to C-terminus: Cytochrome P450 2C21 (487 aa).

C432 serves as a coordination point for heme.

It belongs to the cytochrome P450 family. Heme is required as a cofactor. In terms of tissue distribution, liver.

It localises to the endoplasmic reticulum membrane. Its subcellular location is the microsome membrane. It carries out the reaction an organic molecule + reduced [NADPH--hemoprotein reductase] + O2 = an alcohol + oxidized [NADPH--hemoprotein reductase] + H2O + H(+). Functionally, cytochromes P450 are a group of heme-thiolate monooxygenases. In liver microsomes, this enzyme is involved in an NADPH-dependent electron transport pathway. It oxidizes a variety of structurally unrelated compounds, including steroids, fatty acids, and xenobiotics. Showed testosterone hydrolase activity. The sequence is that of Cytochrome P450 2C21 (CYP2C21) from Canis lupus familiaris (Dog).